Reading from the N-terminus, the 427-residue chain is Imidazolonepropionase (427 aa).

Fe(3+)-binding residues include histidine 78 and histidine 80. The Zn(2+) site is built by histidine 78 and histidine 80. 4-imidazolone-5-propanoate contacts are provided by arginine 87, tyrosine 150, and histidine 183. Tyrosine 150 serves as a coordination point for N-formimidoyl-L-glutamate. Histidine 255 is a Fe(3+) binding site. Histidine 255 contributes to the Zn(2+) binding site. 4-imidazolone-5-propanoate is bound at residue glutamate 258. Aspartate 330 contributes to the Fe(3+) binding site. Aspartate 330 contacts Zn(2+). Asparagine 332 and glycine 334 together coordinate N-formimidoyl-L-glutamate. Threonine 335 serves as a coordination point for 4-imidazolone-5-propanoate.

It belongs to the metallo-dependent hydrolases superfamily. HutI family. Zn(2+) serves as cofactor. The cofactor is Fe(3+).

The protein resides in the cytoplasm. It catalyses the reaction 4-imidazolone-5-propanoate + H2O = N-formimidoyl-L-glutamate. The protein operates within amino-acid degradation; L-histidine degradation into L-glutamate; N-formimidoyl-L-glutamate from L-histidine: step 3/3. Catalyzes the hydrolytic cleavage of the carbon-nitrogen bond in imidazolone-5-propanoate to yield N-formimidoyl-L-glutamate. It is the third step in the universal histidine degradation pathway. The chain is Imidazolonepropionase from Herpetosiphon aurantiacus (strain ATCC 23779 / DSM 785 / 114-95).